A 227-amino-acid chain; its full sequence is Ribonuclease 3 (227 aa).

Residues 7-132 (LTAFMDRLGY…VIAAVYLDGG (126 aa)) enclose the RNase III domain. Glu45 serves as a coordination point for Mg(2+). Asp49 is a catalytic residue. Mg(2+) is bound by residues Asp118 and Glu121. Glu121 is an active-site residue. The region spanning 157–226 (DAKTALQEWA…AKDLLAQLAG (70 aa)) is the DRBM domain.

Belongs to the ribonuclease III family. In terms of assembly, homodimer. The cofactor is Mg(2+).

It localises to the cytoplasm. It carries out the reaction Endonucleolytic cleavage to 5'-phosphomonoester.. In terms of biological role, digests double-stranded RNA. Involved in the processing of primary rRNA transcript to yield the immediate precursors to the large and small rRNAs (23S and 16S). Processes some mRNAs, and tRNAs when they are encoded in the rRNA operon. Processes pre-crRNA and tracrRNA of type II CRISPR loci if present in the organism. This Jannaschia sp. (strain CCS1) protein is Ribonuclease 3.